A 556-amino-acid chain; its full sequence is Dihydroxy-acid dehydratase (556 aa).

D78 provides a ligand contact to Mg(2+). C119 lines the [2Fe-2S] cluster pocket. Mg(2+) contacts are provided by D120 and K121. Position 121 is an N6-carboxylysine (K121). Position 191 (C191) interacts with [2Fe-2S] cluster. Residue E442 participates in Mg(2+) binding. The active-site Proton acceptor is the S468.

This sequence belongs to the IlvD/Edd family. In terms of assembly, homodimer. The cofactor is [2Fe-2S] cluster. Requires Mg(2+) as cofactor.

It catalyses the reaction (2R)-2,3-dihydroxy-3-methylbutanoate = 3-methyl-2-oxobutanoate + H2O. The enzyme catalyses (2R,3R)-2,3-dihydroxy-3-methylpentanoate = (S)-3-methyl-2-oxopentanoate + H2O. The protein operates within amino-acid biosynthesis; L-isoleucine biosynthesis; L-isoleucine from 2-oxobutanoate: step 3/4. Its pathway is amino-acid biosynthesis; L-valine biosynthesis; L-valine from pyruvate: step 3/4. Its function is as follows. Functions in the biosynthesis of branched-chain amino acids. Catalyzes the dehydration of (2R,3R)-2,3-dihydroxy-3-methylpentanoate (2,3-dihydroxy-3-methylvalerate) into 2-oxo-3-methylpentanoate (2-oxo-3-methylvalerate) and of (2R)-2,3-dihydroxy-3-methylbutanoate (2,3-dihydroxyisovalerate) into 2-oxo-3-methylbutanoate (2-oxoisovalerate), the penultimate precursor to L-isoleucine and L-valine, respectively. The protein is Dihydroxy-acid dehydratase of Clostridium kluyveri (strain NBRC 12016).